A 404-amino-acid chain; its full sequence is Glutamate-pyruvate aminotransferase AlaA (404 aa).

The L-alanine site is built by glycine 41 and asparagine 179. Residue lysine 240 is modified to N6-(pyridoxal phosphate)lysine. L-alanine is bound at residue arginine 378.

This sequence belongs to the class-I pyridoxal-phosphate-dependent aminotransferase family. Homodimer. It depends on pyridoxal 5'-phosphate as a cofactor.

The enzyme catalyses L-alanine + 2-oxoglutarate = pyruvate + L-glutamate. Its pathway is amino-acid biosynthesis; L-alanine biosynthesis. In terms of biological role, involved in the biosynthesis of alanine. Catalyzes the transamination of pyruvate by glutamate, leading to the formation of L-alanine and 2-oxoglutarate. Is also able to catalyze the reverse reaction. The chain is Glutamate-pyruvate aminotransferase AlaA (alaA) from Haemophilus influenzae (strain ATCC 51907 / DSM 11121 / KW20 / Rd).